A 492-amino-acid polypeptide reads, in one-letter code: DEAD-box ATP-dependent RNA helicase RhpA (492 aa).

Residues 20–48 (PSFNDLGLKESVLKSVYEAGFTSPSPIQE) carry the Q motif motif. One can recognise a Helicase ATP-binding domain in the interval 51–220 (IPAVLQGRDV…DKILENPIKI (170 aa)). 64-71 (AQTGTGKT) is a binding site for ATP. Positions 168–171 (DESD) match the DEAD box motif. Residues 231 to 393 (DITQRFYVIN…EIPTINENQI (163 aa)) form the Helicase C-terminal domain. The disordered stretch occupies residues 445-492 (AIQNPKEKTPKPSNKKTPQHERARSFKKGQHRDRHPKTNHYSKKPKRR). The segment covering 469 to 492 (SFKKGQHRDRHPKTNHYSKKPKRR) has biased composition (basic residues).

This sequence belongs to the DEAD box helicase family. In terms of assembly, homodimer. Interacts with RNase J (rnj), might be a member of a minimal RNA degradosome complex.

It is found in the cytoplasm. It carries out the reaction ATP + H2O = ADP + phosphate + H(+). Its function is as follows. DEAD-box RNA helicase probably involved in RNA degradation. Unwinds dsRNA in both 5'- and 3'-directions. In Helicobacter pylori (strain ATCC 700392 / 26695) (Campylobacter pylori), this protein is DEAD-box ATP-dependent RNA helicase RhpA (rhpA).